Consider the following 198-residue polypeptide: Mitrocomin (198 aa).

The propeptide occupies 1 to 8 (MSMGSRYA). EF-hand domains follow at residues 19–54 (KWIA…IICK), 118–147 (DALF…AGIQ), and 148–183 (QSRG…FWYS). Positions 32, 34, 36, 38, 43, 125, 127, 129, 131, 136, 161, 163, 165, 167, and 172 each coordinate Ca(2+).

This sequence belongs to the aequorin family.

In terms of biological role, ca(2+)-dependent bioluminescence photoprotein. Displays an emission peak at 470 nm (blue light). Trace amounts of calcium ion trigger the intramolecular oxidation of the chromophore, coelenterazine into coelenteramide and CO(2) with the concomitant emission of light. The chain is Mitrocomin (MI17) from Mitrocoma cellularia (Cross jellyfish).